The chain runs to 462 residues: 23S rRNA (uracil(1939)-C(5))-methyltransferase RlmD (462 aa).

A TRAM domain is found at lysine 6–glutamate 76. [4Fe-4S] cluster contacts are provided by cysteine 90, cysteine 96, cysteine 99, and cysteine 178. S-adenosyl-L-methionine-binding residues include glutamine 287, phenylalanine 316, asparagine 321, glutamate 340, aspartate 367, and aspartate 388. Cysteine 414 acts as the Nucleophile in catalysis.

This sequence belongs to the class I-like SAM-binding methyltransferase superfamily. RNA M5U methyltransferase family. RlmD subfamily.

The enzyme catalyses uridine(1939) in 23S rRNA + S-adenosyl-L-methionine = 5-methyluridine(1939) in 23S rRNA + S-adenosyl-L-homocysteine + H(+). Catalyzes the formation of 5-methyl-uridine at position 1939 (m5U1939) in 23S rRNA. This chain is 23S rRNA (uracil(1939)-C(5))-methyltransferase RlmD, found in Acinetobacter baumannii (strain AB0057).